The chain runs to 434 residues: Na(+)/H(+) antiporter NhaA 1 (434 aa).

10 helical membrane passes run 30-50 (TGGL…NVAG), 70-90 (LSIE…VTGL), 108-128 (ALPI…FVLV), 141-161 (VGWA…LAVV), 172-192 (FLLT…AIFY), 195-215 (QVHW…TVAV), 286-306 (FAVP…VSGF), 318-338 (VIAG…WLLA), 354-374 (VLGM…IGSL), and 386-406 (VTLG…VVLS).

This sequence belongs to the NhaA Na(+)/H(+) (TC 2.A.33) antiporter family.

Its subcellular location is the cell membrane. It carries out the reaction Na(+)(in) + 2 H(+)(out) = Na(+)(out) + 2 H(+)(in). Its function is as follows. Na(+)/H(+) antiporter that extrudes sodium in exchange for external protons. This Kineococcus radiotolerans (strain ATCC BAA-149 / DSM 14245 / SRS30216) protein is Na(+)/H(+) antiporter NhaA 1.